The primary structure comprises 258 residues: MNIPFPFSFPPAICLLLIPGVFPVSCEGIIGGNEVAPHTRRYMALIKGLKLCAGALIKENWVLTAAHCDLKGNPQVILGAHSTSHKEKLDQVFSIKKAIPYPCFDPQTFEGDLQLLQLEGKATMTKAVGILQLPRTEDDVKPHTKCHVAGWGSTKKDACQMSNALREANVTVIDRKICNDAQHYNFNPVIDLSMICAGGRKGEDDSCEGDSGSPLICDNVFRGVTSFGKCGNPQKPGIYILLTKKHLNWIKKTIAGAI.

Residues 1–26 (MNIPFPFSFPPAICLLLIPGVFPVSC) form the signal peptide. Positions 27–28 (EG) are cleaved as a propeptide — activation peptide. In terms of domain architecture, Peptidase S1 spans 29–255 (IIGGNEVAPH…HLNWIKKTIA (227 aa)). Residues Cys-52 and Cys-68 are joined by a disulfide bond. Catalysis depends on charge relay system residues His-67 and Asp-112. Intrachain disulfides connect Cys-146–Cys-217, Cys-178–Cys-196, and Cys-207–Cys-230. N-linked (GlcNAc...) asparagine glycosylation occurs at Asn-169. Ser-211 acts as the Charge relay system in catalysis.

This sequence belongs to the peptidase S1 family. Granzyme subfamily. As to quaternary structure, homodimer; disulfide-linked. Interacts with APEX1.

Its subcellular location is the secreted. The protein localises to the cytoplasmic granule. It carries out the reaction Hydrolysis of proteins, including fibronectin, type IV collagen and nucleolin. Preferential cleavage: -Arg-|-Xaa-, -Lys-|-Xaa- &gt;&gt; -Phe-|-Xaa- in small molecule substrates.. Functionally, abundant protease in the cytosolic granules of cytotoxic T-cells and NK-cells which activates caspase-independent pyroptosis when delivered into the target cell through the immunological synapse. It cleaves after Lys or Arg. Cleaves APEX1 after 'Lys-31' and destroys its oxidative repair activity. Cleaves the nucleosome assembly protein SET after 'Lys-189', which disrupts its nucleosome assembly activity and allows the SET complex to translocate into the nucleus to nick and degrade the DNA. The sequence is that of Granzyme A (GZMA) from Bos taurus (Bovine).